Reading from the N-terminus, the 297-residue chain is uncharacterized protein (297 aa).

The stretch at 128–156 (RGVIVEQESEAAAEKDELESLAKVLESDF) forms a coiled coil.

This is an uncharacterized protein from Bacillus subtilis (strain 168).